Reading from the N-terminus, the 601-residue chain is Glutamine--fructose-6-phosphate aminotransferase [isomerizing] (601 aa).

Cys-2 serves as the catalytic Nucleophile; for GATase activity. A Glutamine amidotransferase type-2 domain is found at 2–216 (CGIVGYIGTN…DKEIVIVTKD (215 aa)). 2 consecutive SIS domains span residues 282–421 (ILDE…EIGD) and 453–591 (IAGE…VDKP). Catalysis depends on Lys-596, which acts as the For Fru-6P isomerization activity.

Homodimer.

Its subcellular location is the cytoplasm. It catalyses the reaction D-fructose 6-phosphate + L-glutamine = D-glucosamine 6-phosphate + L-glutamate. Its function is as follows. Catalyzes the first step in hexosamine metabolism, converting fructose-6P into glucosamine-6P using glutamine as a nitrogen source. In Listeria innocua serovar 6a (strain ATCC BAA-680 / CLIP 11262), this protein is Glutamine--fructose-6-phosphate aminotransferase [isomerizing].